Here is a 175-residue protein sequence, read N- to C-terminus: Urease accessory protein UreE (175 aa).

The disordered stretch occupies residues 134–175 (FQPESGAYGGGHHHGDESATDLHNPGHGPHRSVPKIHEFKPR).

The protein belongs to the UreE family.

It is found in the cytoplasm. Functionally, involved in urease metallocenter assembly. Binds nickel. Probably functions as a nickel donor during metallocenter assembly. This is Urease accessory protein UreE from Dechloromonas aromatica (strain RCB).